A 110-amino-acid polypeptide reads, in one-letter code: uncharacterized protein (110 aa).

Residues Glu-16–Ile-46 adopt a coiled-coil conformation. A compositionally biased stretch (basic and acidic residues) spans Glu-85–Glu-96. The disordered stretch occupies residues Glu-85 to Gln-110.

This is an uncharacterized protein from Bacillus subtilis (strain 168).